A 1040-amino-acid chain; its full sequence is Multidrug resistance protein MdtB (1040 aa).

12 helical membrane passes run 25 to 45 (LLMV…PVSA), 347 to 367 (LMMA…NIPA), 369 to 389 (IIPG…MVFL), 396 to 416 (LTLM…IVVI), 440 to 460 (IGFT…PLLF), 472 to 492 (FAIT…TLTP), 537 to 557 (WLTL…WVFI), 863 to 883 (LGST…VLGI), 888 to 908 (FIHP…ALLA), 911 to 931 (IAGS…IGIV), 968 to 988 (ILMT…STGV), and 998 to 1018 (IGMV…TPVI).

It belongs to the resistance-nodulation-cell division (RND) (TC 2.A.6) family. MdtB subfamily. As to quaternary structure, part of a tripartite efflux system composed of MdtA, MdtB and MdtC. MdtB forms a heteromultimer with MdtC.

It localises to the cell inner membrane. The MdtABC tripartite complex confers resistance against novobiocin and deoxycholate. The sequence is that of Multidrug resistance protein MdtB from Escherichia coli O127:H6 (strain E2348/69 / EPEC).